The primary structure comprises 494 residues: NADH-quinone oxidoreductase subunit N 2 (494 aa).

A run of 14 helical transmembrane segments spans residues 14–34 (LPQIALTVAAFFVLACDGMLL), 45–65 (IAMLLSVAGSLVALALLPLTA), 82–102 (VVQVVLLLFTLAVTLLSGSVL), 116–136 (IGEFFALLLFATVAALFLVST), 139–159 (LLLIFLAVEFLSLVLYILTAF), 174–194 (FLFGGMSAGFLLFGISLLYGV), 214–234 (LLVAIVLVILGFGFKIAAAPF), 262–282 (FFVFAQVLFIGVASASGNAAW), 289–309 (WMPILAAVAVLSMLLGNLAAL), 317–337 (LLAYSAIGHAGYLLLGLIAHT), 344–364 (LLYYVFTYALAVLGAFGVLAI), 388–408 (ACLLVFLLSLAGIPPLVGFFA), 422–442 (AFGLLWLVILAILMSVVALFY), and 470–490 (ITLLVMAALTLLLGCAPNLLM).

This sequence belongs to the complex I subunit 2 family. As to quaternary structure, NDH-1 is composed of 14 different subunits. Subunits NuoA, H, J, K, L, M, N constitute the membrane sector of the complex.

Its subcellular location is the cell inner membrane. It carries out the reaction a quinone + NADH + 5 H(+)(in) = a quinol + NAD(+) + 4 H(+)(out). Functionally, NDH-1 shuttles electrons from NADH, via FMN and iron-sulfur (Fe-S) centers, to quinones in the respiratory chain. The immediate electron acceptor for the enzyme in this species is believed to be ubiquinone. Couples the redox reaction to proton translocation (for every two electrons transferred, four hydrogen ions are translocated across the cytoplasmic membrane), and thus conserves the redox energy in a proton gradient. The protein is NADH-quinone oxidoreductase subunit N 2 of Acidobacterium capsulatum (strain ATCC 51196 / DSM 11244 / BCRC 80197 / JCM 7670 / NBRC 15755 / NCIMB 13165 / 161).